The chain runs to 168 residues: Small ribosomal subunit protein uS8 (168 aa).

The segment at 59–93 (EEYKKMKELAEKSPNPKMKRYLKQLEEYNKGTQYP) is not found in other S8 sequences.

The protein belongs to the universal ribosomal protein uS8 family. As to quaternary structure, part of the 30S ribosomal subunit. Contacts proteins S5 and S12.

Its function is as follows. One of the primary rRNA binding proteins, it binds directly to 16S rRNA central domain where it helps coordinate assembly of the platform of the 30S subunit. This Aquifex aeolicus (strain VF5) protein is Small ribosomal subunit protein uS8.